Here is a 323-residue protein sequence, read N- to C-terminus: Arginase-1 (323 aa).

Residues 1–27 (MSSKPKSLEIIGAPFSKGQPRGGVEKG) form a disordered region. Position 7 is a phosphoserine (serine 7). The residue at position 17 (lysine 17) is an N6-succinyllysine. Serine 62 and serine 72 each carry phosphoserine. Lysine 75 carries the post-translational modification N6-succinyllysine. The Mn(2+) site is built by histidine 101, aspartate 124, histidine 126, and aspartate 128. Substrate contacts are provided by residues 126–130 (HTDIN) and 137–139 (SGN). At serine 163 the chain carries Phosphoserine. Substrate is bound at residue aspartate 183. Serine 217 carries the post-translational modification Phosphoserine. Aspartate 232 and aspartate 234 together coordinate Mn(2+). Threonine 246 and glutamate 277 together coordinate substrate. At threonine 281 the chain carries Phosphothreonine.

This sequence belongs to the arginase family. Homotrimer. Interacts with CMTM6. Requires Mn(2+) as cofactor. As to expression, expressed in macrophages. Expressed in precursor and mature group 2 innate lymphoid cells (ILC2s). Expressed in lung tumor-associated myeloid cells. Expressed in lung tumor-infiltrating dendritic cells.

The protein resides in the cytoplasm. Its subcellular location is the cytoplasmic granule. It carries out the reaction L-arginine + H2O = urea + L-ornithine. Its pathway is nitrogen metabolism; urea cycle; L-ornithine and urea from L-arginine: step 1/1. Key element of the urea cycle converting L-arginine to urea and L-ornithine, which is further metabolized into metabolites proline and polyamides that drive collagen synthesis and bioenergetic pathways critical for cell proliferation, respectively; the urea cycle takes place primarily in the liver and, to a lesser extent, in the kidneys. Its function is as follows. Functions in L-arginine homeostasis in nonhepatic tissues characterized by the competition between nitric oxide synthase (NOS) and arginase for the available intracellular substrate arginine. Arginine metabolism is a critical regulator of innate and adaptive immune responses. Involved in an antimicrobial effector pathway in polymorphonuclear granulocytes (PMN). Upon PMN cell death is liberated from the phagolysosome and depletes arginine in the microenvironment leading to suppressed T cell and natural killer (NK) cell proliferation and cytokine secretion. In group 2 innate lymphoid cells (ILC2s) promotes acute type 2 inflammation in the lung and is involved in optimal ILC2 proliferation but not survival. Plays a role in the immune response of alternatively activated or M2 macrophages in processes such as wound healing and tissue regeneration, immune defense against multicellular pathogens and parasites, and immune suppression and allergic inflammation; the regulatory outcome seems to be organ specific. In tumor-infiltrating dendritic cells (DCs) and myeloid-derived suppressor cells (MDSCs) plays a role in suppression of T cell-mediated antitumor immunity. The protein is Arginase-1 (Arg1) of Mus musculus (Mouse).